The following is a 441-amino-acid chain: Xaa-Pro dipeptidase (441 aa).

Mn(2+) contacts are provided by Asp-244, Asp-255, His-336, Glu-381, and Glu-420.

The protein belongs to the peptidase M24B family. Bacterial-type prolidase subfamily. Mn(2+) serves as cofactor.

The enzyme catalyses Xaa-L-Pro dipeptide + H2O = an L-alpha-amino acid + L-proline. Functionally, splits dipeptides with a prolyl residue in the C-terminal position. The protein is Xaa-Pro dipeptidase of Xanthomonas axonopodis pv. citri (strain 306).